A 98-amino-acid chain; its full sequence is Large ribosomal subunit protein uL23 (98 aa).

Belongs to the universal ribosomal protein uL23 family. Part of the 50S ribosomal subunit. Contacts protein L29, and trigger factor when it is bound to the ribosome.

Its function is as follows. One of the early assembly proteins it binds 23S rRNA. One of the proteins that surrounds the polypeptide exit tunnel on the outside of the ribosome. Forms the main docking site for trigger factor binding to the ribosome. This Lactobacillus gasseri (strain ATCC 33323 / DSM 20243 / BCRC 14619 / CIP 102991 / JCM 1131 / KCTC 3163 / NCIMB 11718 / NCTC 13722 / AM63) protein is Large ribosomal subunit protein uL23.